Reading from the N-terminus, the 361-residue chain is Terpene synthase 6 (361 aa).

Positions 81-86 (DDVLDA) match the DDxx(x)D/E motif motif. The NDxxSxxxD/E motif signature appears at 223-231 (NDLVSYEKE).

Belongs to the terpene synthase family.

The catalysed reaction is (2E,6E)-farnesyl diphosphate = (2S,3R,6S,9S)-(-)-protoillud-7-ene + diphosphate. In terms of biological role, terpene synthase that converts its substrate farnesyl diphosphate (FPP) into the sesquiterpene (2S,3R,6S,9S)-(-)-protoillud-7-ene. This chain is Terpene synthase 6, found in Dictyostelium discoideum (Social amoeba).